The primary structure comprises 352 residues: Threonine synthase (352 aa).

K59 is subject to N6-(pyridoxal phosphate)lysine. Pyridoxal 5'-phosphate contacts are provided by residues N85, 185–189, and T314; that span reads GNAGN.

The protein belongs to the threonine synthase family. The cofactor is pyridoxal 5'-phosphate.

The catalysed reaction is O-phospho-L-homoserine + H2O = L-threonine + phosphate. Its pathway is amino-acid biosynthesis; L-threonine biosynthesis; L-threonine from L-aspartate: step 5/5. Its function is as follows. Catalyzes the gamma-elimination of phosphate from L-phosphohomoserine and the beta-addition of water to produce L-threonine. This chain is Threonine synthase (thrC), found in Bacillus subtilis (strain 168).